The sequence spans 365 residues: Transcription factor MYB93 (365 aa).

HTH myb-type domains follow at residues E9–L61 and R62–L116. 2 DNA-binding regions (H-T-H motif) span residues W37 to L61 and W89 to L112.

Interacts with FBX5.

It localises to the nucleus. The protein resides in the cytoplasm. Transcription factor that acts as a negative regulator of lateral root (LR) development. Required for normal auxin responses during LR development. May be part of a negative feedback loop stimulated specifically in the endodermis upon LR initiation to ensure that LRs are formed only in the correct place. This is Transcription factor MYB93 from Arabidopsis thaliana (Mouse-ear cress).